The primary structure comprises 155 residues: MNVEIVEREESKTAGFHLVGPWEVTAPEGFDKLVAWTSKHNVMGPWMGVYHGNPRAVPAEELKIETVIGVPTDFELPEGSEGARLSIIPAGTYAMNLVHVNDGDFTKPWYAFFDEWLPDSGYVMAEGPCFDHYLNDGSQSGEWDIELYIPVSKAE.

The protein belongs to the DNA gyrase inhibitor family. As to quaternary structure, interacts with DNA gyrase.

Its subcellular location is the cytoplasm. Functionally, inhibits the supercoiling activity of DNA gyrase. Acts by inhibiting DNA gyrase at an early step, prior to (or at the step of) binding of DNA by the gyrase. It protects cells against toxins that target DNA gyrase, by inhibiting activity of these toxins and reducing the formation of lethal double-strand breaks in the cell. The chain is DNA gyrase inhibitor from Erwinia billingiae (strain Eb661).